The chain runs to 61 residues: Beta-defensin 13 (61 aa).

Positions 1-21 (MRLLYLLFAAVMLLFLQAVPA) are cleaved as a signal peptide. A 1,2-diacyl-sn-glycero-3-phosphate is bound by residues Ser24, Arg40, His44, Asn51, Asn53, Gly54, His58, and Lys61. 3 disulfides stabilise this stretch: Cys31-Cys59, Cys38-Cys52, and Cys42-Cys60.

This sequence belongs to the beta-defensin family. As to quaternary structure, monomeric. Forms multimeric, probably including tetrameric, complexes in the presence of phospholipid phosphatidic acid.

The protein localises to the secreted. Functionally, exhibits antimicrobial activity against fungi. Antimicrobial activity in a pH-dependent manner against the yeast C.albicans; activity is salt tolerant and retains antifungal activity in NaCl concentrations of 100mM. Permeabilizes C.albicans cell membranes via targeting plasma membrane phospholipid phosphatidic acid. In Crocodylus porosus (Saltwater crocodile), this protein is Beta-defensin 13.